The chain runs to 533 residues: Drimenyl diphosphate synthase (533 aa).

(2E,6E)-farnesyl diphosphate-binding residues include R132, K133, Q163, and W165. E169 contributes to the Mg(2+) binding site. PFTB repeat units follow at residues V274–A316, V324–P366, V372–G415, A425–P466, and L474–L517. The Proton donor role is filled by D303. R501 contributes to the (2E,6E)-farnesyl diphosphate binding site.

It belongs to the terpene cyclase/mutase family. The cofactor is Mg(2+). It depends on Ni(2+) as a cofactor. Co(2+) serves as cofactor.

The catalysed reaction is (2E,6E)-farnesyl diphosphate = (5S,9S,10S)-drim-7-en-11-yl diphosphate. Its function is as follows. Catalyzes the cyclization of farnesyl diphosphate (FPP) to drimenyl diphosphate. Cannot use geranylgeranyl diphosphate (GGPP) as substrate. This chain is Drimenyl diphosphate synthase, found in Streptomyces showdoensis.